The primary structure comprises 178 residues: uncharacterized protein (178 aa).

Residues 9–173 (LTLRKMELED…IDVYMFSLLK (165 aa)) form the N-acetyltransferase domain.

This is an uncharacterized protein from Bacillus licheniformis.